The sequence spans 522 residues: Putative aldehyde dehydrogenase-like protein C21C3 (522 aa).

Residue Glu239 is the Proton acceptor of the active site. Cys273 (nucleophile) is an active-site residue.

The protein belongs to the aldehyde dehydrogenase family.

It localises to the cytoplasm. The protein localises to the nucleus. The protein is Putative aldehyde dehydrogenase-like protein C21C3 of Schizosaccharomyces pombe (strain 972 / ATCC 24843) (Fission yeast).